A 343-amino-acid polypeptide reads, in one-letter code: N-acetyl-gamma-glutamyl-phosphate reductase (343 aa).

Cysteine 149 is a catalytic residue.

This sequence belongs to the NAGSA dehydrogenase family. Type 1 subfamily.

The protein localises to the cytoplasm. It carries out the reaction N-acetyl-L-glutamate 5-semialdehyde + phosphate + NADP(+) = N-acetyl-L-glutamyl 5-phosphate + NADPH + H(+). Its pathway is amino-acid biosynthesis; L-arginine biosynthesis; N(2)-acetyl-L-ornithine from L-glutamate: step 3/4. In terms of biological role, catalyzes the NADPH-dependent reduction of N-acetyl-5-glutamyl phosphate to yield N-acetyl-L-glutamate 5-semialdehyde. This chain is N-acetyl-gamma-glutamyl-phosphate reductase, found in Exiguobacterium sibiricum (strain DSM 17290 / CCUG 55495 / CIP 109462 / JCM 13490 / 255-15).